A 210-amino-acid polypeptide reads, in one-letter code: Quaternary-amine-specific corrinoid protein (210 aa).

The 90-residue stretch at 1–90 folds into the B12-binding N-terminal domain; sequence MADWKNLTQA…VLGSGDTAVA (90 aa). A B12-binding domain is found at 90 to 210; the sequence is AGTILIGTAH…GVKICQAWVG (121 aa). His-103 provides a ligand contact to methylcob(III)alamin.

This sequence belongs to the methylamine corrinoid protein family. In terms of assembly, the proline betaine:THF methyl transfer system is composed of two methyltransferases, MtpB and MtqA, and the corrinoid protein MtqC. The L-carnitine:THF methyl transfer system is composed of two methyltransferases, MtcB and MtqA, and the corrinoid protein MtqC.

Involved in the degradation of the quaternary amines L-proline betaine and L-carnitine. Component of a corrinoid-dependent methyltransferase system that transfers a methyl group from L-proline betaine or L-carnitine to tetrahydrofolate (THF), forming methyl-THF, a key intermediate in the Wood-Ljungdahl acetogenesis pathway. Acts as a methyl group carrier between MtpB or MtcB, and MtqA. A methyl group from L-proline betaine or L-carnitine is first transferred to the corrinoid prosthetic group of MtqC by MtpB or MtcB, respectively, and then transferred from MtqC to THF by MtqA. The protein is Quaternary-amine-specific corrinoid protein of Eubacterium limosum.